The following is a 369-amino-acid chain: Maltose/maltodextrin import ATP-binding protein MalK (369 aa).

In terms of domain architecture, ABC transporter spans 4–234; sequence VQLRNVTKAW…PADRFVAGFI (231 aa). Residue 36–43 coordinates ATP; the sequence is GPSGCGKS.

Belongs to the ABC transporter superfamily. Maltooligosaccharide importer (TC 3.A.1.1.1) family. The complex is composed of two ATP-binding proteins (MalK), two transmembrane proteins (MalG and MalK) and a solute-binding protein (MalE).

Its subcellular location is the cell inner membrane. The catalysed reaction is D-maltose(out) + ATP + H2O = D-maltose(in) + ADP + phosphate + H(+). Part of the ABC transporter complex MalEFGK involved in maltose/maltodextrin import. Responsible for energy coupling to the transport system. This chain is Maltose/maltodextrin import ATP-binding protein MalK, found in Salmonella typhi.